The following is a 232-amino-acid chain: Nucleoside diphosphate kinase 2, chloroplastic (232 aa).

The transit peptide at 1–79 (MGCLSVVGAS…TRIFLPHLVA (79 aa)) directs the protein to the chloroplast. ATP-binding residues include lysine 92, phenylalanine 140, arginine 168, threonine 174, arginine 185, and asparagine 195. Histidine 198 functions as the Pros-phosphohistidine intermediate in the catalytic mechanism.

The protein belongs to the NDK family. The cofactor is Mg(2+).

It is found in the plastid. The protein localises to the chloroplast. It catalyses the reaction a 2'-deoxyribonucleoside 5'-diphosphate + ATP = a 2'-deoxyribonucleoside 5'-triphosphate + ADP. It carries out the reaction a ribonucleoside 5'-diphosphate + ATP = a ribonucleoside 5'-triphosphate + ADP. In terms of biological role, major role in the synthesis of nucleoside triphosphates other than ATP. The ATP gamma phosphate is transferred to the NDP beta phosphate via a ping-pong mechanism, using a phosphorylated active-site intermediate. This chain is Nucleoside diphosphate kinase 2, chloroplastic, found in Nicotiana tabacum (Common tobacco).